The sequence spans 89 residues: Class I hydrophobin C (89 aa).

The signal sequence occupies residues 1 to 16 (MKFSLATIALAAAVAA). 4 disulfide bridges follow: Cys-28-Cys-68, Cys-39-Cys-60, Cys-40-Cys-52, and Cys-69-Cys-85. A glycan (N-linked (GlcNAc...) asparagine) is linked at Asn-36.

It belongs to the fungal hydrophobin family.

The protein resides in the secreted. The protein localises to the cell wall. It is found in the vacuole. It localises to the cytoplasmic vesicle. Aerial growth, conidiation, and dispersal of filamentous fungi in the environment rely upon a capability of their secreting small amphipathic proteins called hydrophobins (HPBs) with low sequence identity. Class I can self-assemble into an outermost layer of rodlet bundles on aerial cell surfaces, conferring cellular hydrophobicity that supports fungal growth, development and dispersal; whereas Class II form highly ordered films at water-air interfaces through intermolecular interactions but contribute nothing to the rodlet structure. Hyd1C contributes to certain cell wall-related features, such as hydrophobicity but is not involved in cell wall-related events during fungal proliferation in host hemocoel. Does not contribute to conidial hydrophobicity. The sequence is that of Class I hydrophobin C from Beauveria bassiana (strain ARSEF 2860) (White muscardine disease fungus).